The sequence spans 252 residues: Triosephosphate isomerase (252 aa).

10 to 12 (NWK) lines the substrate pocket. The active-site Electrophile is the histidine 96. Catalysis depends on glutamate 168, which acts as the Proton acceptor. Substrate-binding positions include glycine 174, serine 214, and 235 to 236 (GG).

It belongs to the triosephosphate isomerase family. In terms of assembly, homodimer.

Its subcellular location is the cytoplasm. The enzyme catalyses D-glyceraldehyde 3-phosphate = dihydroxyacetone phosphate. Its pathway is carbohydrate biosynthesis; gluconeogenesis. It participates in carbohydrate degradation; glycolysis; D-glyceraldehyde 3-phosphate from glycerone phosphate: step 1/1. Involved in the gluconeogenesis. Catalyzes stereospecifically the conversion of dihydroxyacetone phosphate (DHAP) to D-glyceraldehyde-3-phosphate (G3P). This is Triosephosphate isomerase from Streptococcus pyogenes serotype M1.